The sequence spans 184 residues: Ras-related protein Rap-1b (184 aa).

10-17 (GSGGVGKS) is a binding site for GTP. An Effector region motif is present at residues 32–40 (YDPTIEDSY). Residues 57 to 61 (DTAGT) and 116 to 119 (NKCD) each bind GTP. A Cysteine methyl ester modification is found at Cys181. A lipid anchor (S-geranylgeranyl cysteine) is attached at Cys181. A propeptide spans 182–184 (HLL) (removed in mature form).

Belongs to the small GTPase superfamily. Ras family.

It is found in the cell membrane. The protein localises to the cytoplasm. It localises to the cytosol. Its subcellular location is the cell junction. It carries out the reaction GTP + H2O = GDP + phosphate + H(+). Probable GTP-binding protein that possesses GTPase activity. May play a role in endothelial cell polarity and endothelial barrier function. This chain is Ras-related protein Rap-1b (rap1b), found in Xenopus laevis (African clawed frog).